The sequence spans 350 residues: Homoserine O-succinyltransferase (350 aa).

Cys-146 serves as the catalytic Acyl-thioester intermediate. Residues Lys-167 and Ser-196 each coordinate substrate. The Proton acceptor role is filled by His-239. The active site involves Glu-241. Residue Arg-253 participates in substrate binding.

It belongs to the MetA family.

Its subcellular location is the cytoplasm. The enzyme catalyses L-homoserine + succinyl-CoA = O-succinyl-L-homoserine + CoA. It functions in the pathway amino-acid biosynthesis; L-methionine biosynthesis via de novo pathway; O-succinyl-L-homoserine from L-homoserine: step 1/1. Its function is as follows. Transfers a succinyl group from succinyl-CoA to L-homoserine, forming succinyl-L-homoserine. This is Homoserine O-succinyltransferase from Cardiobacterium hominis (strain ATCC 15826 / DSM 8339 / NCTC 10426 / 6573).